A 718-amino-acid polypeptide reads, in one-letter code: Protein Hook homolog 3 (718 aa).

Methionine 1 is subject to N-acetylmethionine. Positions 1-164 (MFNVESVERV…QELMSKESPV (164 aa)) are sufficient for interaction with microtubules. The residue at position 6 (serine 6) is a Phosphoserine. A Calponin-homology (CH) domain is found at 10–126 (VELCESLLTW…RMLQLILGCA (117 aa)). 2 coiled-coil regions span residues 168 to 433 (HDAY…VQAQ) and 462 to 663 (EIRE…MEEK). Position 238 is a phosphoserine (serine 238). A sufficient for interaction with IIGP1 region spans residues 450 to 671 (SSDSLAAEIV…EKYIVSAWYN (222 aa)). The required for association with Golgi stretch occupies residues 553–718 (EKLHEANNEL…PGHVQPATAR (166 aa)). The interval 682 to 718 (EDRLASTGSGQSFLARQRQATSTRRSYPGHVQPATAR) is disordered. The span at 687-706 (STGSGQSFLARQRQATSTRR) shows a compositional bias: polar residues. Residues serine 693 and serine 707 each carry the phosphoserine modification.

This sequence belongs to the hook family. As to quaternary structure, self-associates. Component of the FTS/Hook/FHIP complex (FHF complex), composed of AKTIP/FTS, FHIP1B, and one or more members of the Hook family of proteins HOOK1, HOOK2, and HOOK3. May interact directly with AKTIP/FTS, HOOK1 and HOOK2. Associates with several subunits of the homotypic vesicular sorting complex (the HOPS complex) including VPS16 and VPS41; these interactions may be indirect. Interacts with IIGP1. Interacts with MSR1, and this association is stimulated by ligand binding to MSR1. Interacts with microtubules. Part of a tripartite complex with dynein and dynactin, acts an adapter linking the dynein motor complex and dynactin. Interacts with dynein intermediate chain and dynactin (DCTN1). Interacts with CCDC181. Interacts with LRGUK. In terms of assembly, (Microbial infection) Interacts with Salmonella typhimurium spiC. As to expression, expressed in brain, cerebellum, heart, intestine, kidney, liver, lung, skeletal muscle, spleen and stomach (at protein level).

The protein resides in the cytoplasm. It localises to the cytoskeleton. It is found in the golgi apparatus. Functionally, acts as an adapter protein linking the dynein motor complex to various cargos and converts dynein from a non-processive to a highly processive motor in the presence of dynactin. Facilitates the interaction between dynein and dynactin and activates dynein processivity (the ability to move along a microtubule for a long distance without falling off the track). Predominantly recruits 2 dyneins, which increases both the force and speed of the microtubule motor. Component of the FTS/Hook/FHIP complex (FHF complex). The FHF complex may function to promote vesicle trafficking and/or fusion via the homotypic vesicular protein sorting complex (the HOPS complex). May regulate clearance of endocytosed receptors such as MSR1. Participates in defining the architecture and localization of the Golgi complex. FHF complex promotes the distribution of AP-4 complex to the perinuclear area of the cell. In terms of biological role, (Microbial infection) Serves as a target for the spiC protein from Salmonella typhimurium, which inactivates it, leading to a strong alteration in cellular trafficking. In Mus musculus (Mouse), this protein is Protein Hook homolog 3 (Hook3).